A 93-amino-acid polypeptide reads, in one-letter code: Acylphosphatase (93 aa).

The Acylphosphatase-like domain occupies 3–93; sequence KQQYFISGKV…FQFNNFKIYY (91 aa). Active-site residues include Arg18 and Asn36.

This sequence belongs to the acylphosphatase family.

It catalyses the reaction an acyl phosphate + H2O = a carboxylate + phosphate + H(+). This Borrelia garinii subsp. bavariensis (strain ATCC BAA-2496 / DSM 23469 / PBi) (Borreliella bavariensis) protein is Acylphosphatase (acyP).